The primary structure comprises 687 residues: DNA ligase (687 aa).

Residues 33–37 (DAEFD), 83–84 (SL), and Glu-113 each bind NAD(+). The active-site N6-AMP-lysine intermediate is the Lys-115. NAD(+) is bound by residues Arg-136, Glu-176, Lys-292, and Lys-316. The Zn(2+) site is built by Cys-410, Cys-413, Cys-429, and Cys-435. The BRCT domain maps to 599–687 (SVPRTLAGVT…GPPAEVGEPT (89 aa)).

This sequence belongs to the NAD-dependent DNA ligase family. LigA subfamily. Mg(2+) serves as cofactor. The cofactor is Mn(2+).

The enzyme catalyses NAD(+) + (deoxyribonucleotide)n-3'-hydroxyl + 5'-phospho-(deoxyribonucleotide)m = (deoxyribonucleotide)n+m + AMP + beta-nicotinamide D-nucleotide.. DNA ligase that catalyzes the formation of phosphodiester linkages between 5'-phosphoryl and 3'-hydroxyl groups in double-stranded DNA using NAD as a coenzyme and as the energy source for the reaction. It is essential for DNA replication and repair of damaged DNA. In Mycobacterium marinum (strain ATCC BAA-535 / M), this protein is DNA ligase.